A 176-amino-acid chain; its full sequence is Lactoylglutathione lyase (176 aa).

A VOC domain is found at 23–167 (VFNHTMLRVK…DGYWVEIVQA (145 aa)). Histidine 26 is a binding site for Ni(2+). Arginine 30 contacts substrate. Glutamate 92 serves as a coordination point for Ni(2+). Asparagine 96, arginine 114, and histidine 118 together coordinate substrate. Ni(2+)-binding residues include histidine 118 and glutamate 163. Glutamate 163 functions as the Proton donor/acceptor in the catalytic mechanism.

This sequence belongs to the glyoxalase I family. In terms of assembly, monomer. Ni(2+) is required as a cofactor. Requires Zn(2+) as cofactor.

The catalysed reaction is (R)-S-lactoylglutathione = methylglyoxal + glutathione. Its pathway is secondary metabolite metabolism; methylglyoxal degradation; (R)-lactate from methylglyoxal: step 1/2. Catalyzes the conversion of hemimercaptal, formed from methylglyoxal and glutathione, to S-lactoylglutathione. This Pseudomonas aeruginosa (strain ATCC 15692 / DSM 22644 / CIP 104116 / JCM 14847 / LMG 12228 / 1C / PRS 101 / PAO1) protein is Lactoylglutathione lyase (gloA).